The primary structure comprises 486 residues: Homoserine O-acetyltransferase (486 aa).

Residues 66-436 enclose the AB hydrolase-1 domain; the sequence is NVLVICHALT…PEGHDAFLLE (371 aa). Ser-162 is a catalytic residue. Ser-162 functions as the Nucleophile in the catalytic mechanism. Residues 248 to 274 are disordered; the sequence is KFSRRSPSIAQQQKAQKAEVRKPSTVS. Positions 250–262 are enriched in polar residues; the sequence is SRRSPSIAQQQKA. Residues Asp-401 and His-430 contribute to the active site.

The protein belongs to the AB hydrolase superfamily. MetX family.

The catalysed reaction is L-homoserine + acetyl-CoA = O-acetyl-L-homoserine + CoA. It participates in amino-acid biosynthesis; L-methionine biosynthesis via de novo pathway; O-acetyl-L-homoserine from L-homoserine: step 1/1. Commits homoserine to the methionine biosynthesis pathway by catalyzing its O-acetylation. The polypeptide is Homoserine O-acetyltransferase (MET2) (Saccharomyces pastorianus (Lager yeast)).